The following is a 411-amino-acid chain: Na(+)/H(+) antiporter NhaA 2 (411 aa).

Helical transmembrane passes span 18–38, 59–79, 97–117, 127–147, 167–187, 218–238, 261–281, 297–317, 338–358, and 366–386; these read VGGS…NSPV, LTVG…VAGL, LLPI…AATI, GWAI…ALTG, LLAI…LWLL, WYCM…LGLL, PLSA…VALS, VIAG…WLAI, VLGA…LAGI, and IAKV…SALL.

Belongs to the NhaA Na(+)/H(+) (TC 2.A.33) antiporter family.

Its subcellular location is the cell membrane. The catalysed reaction is Na(+)(in) + 2 H(+)(out) = Na(+)(out) + 2 H(+)(in). Na(+)/H(+) antiporter that extrudes sodium in exchange for external protons. This chain is Na(+)/H(+) antiporter NhaA 2, found in Rhodococcus jostii (strain RHA1).